The sequence spans 526 residues: Keratin, type I cytoskeletal 10 (526 aa).

The segment covering 1–16 has biased composition (low complexity); sequence MSVRFSSNSRQYSSAR. The tract at residues 1–40 is disordered; sequence MSVRFSSNSRQYSSARSGGGGGGGGGGSSIRVSSTKSSLG. Residues 1-144 form a head region; the sequence is MSVRFSSNSR…GDGGGLLSGN (144 aa). Residues Ser-17, Ser-38, Ser-49, Ser-52, and Ser-169 each carry the phosphoserine modification. Positions 17 to 28 are enriched in gly residues; sequence SGGGGGGGGGGS. Residues 145–180 are coil 1A; sequence EKVTMQNLNDRLASYMNKVRDLEESNYELEGKIKEW. Positions 145–459 constitute an IF rod domain; that stretch reads EKVTMQNLND…SLLEGEGGYV (315 aa). Positions 181-201 are linker 1; that stretch reads YEKHGNSSQREPRDYSKYYKT. The segment at 202 to 293 is coil 1B; it reads IEDLKGQIVN…KNHEEEMKDL (92 aa). The linker 12 stretch occupies residues 294–316; sequence QNVSTGDVNVEMNAAPGVDLTQL. Positions 317–455 are coil 2; that stretch reads LNNMRNQYEQ…QTYRSLLEGE (139 aa). Residues 456 to 526 form a tail region; sequence GGYVGNLQIT…IESETKKHFY (71 aa).

It belongs to the intermediate filament family. In terms of assembly, heterotetramer of two type I and two type II keratins. Heterodimer with KRT1. Two heterodimers of KRT1 and KRT10 form a heterotetramer. The KRT10 subunit in the heterotetramer is probably disulfide-linked.

The protein resides in the secreted. It is found in the extracellular space. It localises to the cell surface. The protein localises to the cytoplasm. Its function is as follows. Plays a role in the establishment of the epidermal barrier on plantar skin. Involved in the maintenance of cell layer development and keratin filament bundles in suprabasal cells of the epithelium. The chain is Keratin, type I cytoskeletal 10 from Rattus norvegicus (Rat).